Consider the following 285-residue polypeptide: Protease HtpX homolog (285 aa).

Transmembrane regions (helical) follow at residues Thr-7–Gly-27 and Gly-30–Asp-50. His-131 lines the Zn(2+) pocket. Glu-132 is an active-site residue. Residue His-135 participates in Zn(2+) binding. The next 2 helical transmembrane spans lie at Ile-146–Gly-166 and Ile-177–Ile-197. Glu-202 lines the Zn(2+) pocket.

It belongs to the peptidase M48B family. Requires Zn(2+) as cofactor.

The protein resides in the cell inner membrane. This Burkholderia cenocepacia (strain ATCC BAA-245 / DSM 16553 / LMG 16656 / NCTC 13227 / J2315 / CF5610) (Burkholderia cepacia (strain J2315)) protein is Protease HtpX homolog.